We begin with the raw amino-acid sequence, 259 residues long: UPF0246 protein Pmen_1032 (259 aa).

It belongs to the UPF0246 family.

In Ectopseudomonas mendocina (strain ymp) (Pseudomonas mendocina), this protein is UPF0246 protein Pmen_1032.